The following is a 208-amino-acid chain: MSKKNSDTKQLEILRYIYDTVDHRGFPPTVREICAAVKLSSTSTVHGHLARLERKGLLIKDATKPRALEITDEGKKELGIKPKRIPVIGVVAAGHPILAVQDIDEYFPLPPDLENDAGELFMLKIHGESMINAGILNGDNVIVKKQNTANNGEIVVAMTDENEATVKRFYKEKDHYRLQPENDTMAPIILPEVTILGKVVGLYRNNID.

The segment at residues 30 to 50 (VREICAAVKLSSTSTVHGHLA) is a DNA-binding region (H-T-H motif). Catalysis depends on for autocatalytic cleavage activity residues Ser129 and Lys167.

This sequence belongs to the peptidase S24 family. Homodimer.

It carries out the reaction Hydrolysis of Ala-|-Gly bond in repressor LexA.. In terms of biological role, represses a number of genes involved in the response to DNA damage (SOS response), including recA and lexA. In the presence of single-stranded DNA, RecA interacts with LexA causing an autocatalytic cleavage which disrupts the DNA-binding part of LexA, leading to derepression of the SOS regulon and eventually DNA repair. This is LexA repressor from Lactobacillus helveticus (strain DPC 4571).